Reading from the N-terminus, the 223-residue chain is Thiamine-phosphate synthase (223 aa).

4-amino-2-methyl-5-(diphosphooxymethyl)pyrimidine is bound by residues 45-49 and N77; that span reads QYREK. Residues D78 and D97 each contribute to the Mg(2+) site. T116 lines the 4-amino-2-methyl-5-(diphosphooxymethyl)pyrimidine pocket. Residue 142-144 coordinates 2-[(2R,5Z)-2-carboxy-4-methylthiazol-5(2H)-ylidene]ethyl phosphate; sequence SYT. K145 is a 4-amino-2-methyl-5-(diphosphooxymethyl)pyrimidine binding site. 2-[(2R,5Z)-2-carboxy-4-methylthiazol-5(2H)-ylidene]ethyl phosphate-binding positions include G173 and 193-194; that span reads VT.

This sequence belongs to the thiamine-phosphate synthase family. The cofactor is Mg(2+).

The catalysed reaction is 2-[(2R,5Z)-2-carboxy-4-methylthiazol-5(2H)-ylidene]ethyl phosphate + 4-amino-2-methyl-5-(diphosphooxymethyl)pyrimidine + 2 H(+) = thiamine phosphate + CO2 + diphosphate. It carries out the reaction 2-(2-carboxy-4-methylthiazol-5-yl)ethyl phosphate + 4-amino-2-methyl-5-(diphosphooxymethyl)pyrimidine + 2 H(+) = thiamine phosphate + CO2 + diphosphate. The enzyme catalyses 4-methyl-5-(2-phosphooxyethyl)-thiazole + 4-amino-2-methyl-5-(diphosphooxymethyl)pyrimidine + H(+) = thiamine phosphate + diphosphate. It functions in the pathway cofactor biosynthesis; thiamine diphosphate biosynthesis; thiamine phosphate from 4-amino-2-methyl-5-diphosphomethylpyrimidine and 4-methyl-5-(2-phosphoethyl)-thiazole: step 1/1. Condenses 4-methyl-5-(beta-hydroxyethyl)thiazole monophosphate (THZ-P) and 2-methyl-4-amino-5-hydroxymethyl pyrimidine pyrophosphate (HMP-PP) to form thiamine monophosphate (TMP). This is Thiamine-phosphate synthase from Dictyoglomus turgidum (strain DSM 6724 / Z-1310).